The sequence spans 432 residues: Adenylosuccinate synthetase (432 aa).

Residues 13-19 (GDEGKGK) and 41-43 (GHT) each bind GTP. D14 (proton acceptor) is an active-site residue. D14 and G41 together coordinate Mg(2+). Residues 14–17 (DEGK), 39–42 (NAGH), T130, R144, Q225, T240, and R304 contribute to the IMP site. H42 functions as the Proton donor in the catalytic mechanism. Residue 300–306 (ATTGRSR) participates in substrate binding. Residues R306, 332–334 (KLD), and 415–417 (STG) each bind GTP.

The protein belongs to the adenylosuccinate synthetase family. In terms of assembly, homodimer. It depends on Mg(2+) as a cofactor.

It localises to the cytoplasm. It carries out the reaction IMP + L-aspartate + GTP = N(6)-(1,2-dicarboxyethyl)-AMP + GDP + phosphate + 2 H(+). It participates in purine metabolism; AMP biosynthesis via de novo pathway; AMP from IMP: step 1/2. In terms of biological role, plays an important role in the de novo pathway of purine nucleotide biosynthesis. Catalyzes the first committed step in the biosynthesis of AMP from IMP. This Yersinia pestis bv. Antiqua (strain Antiqua) protein is Adenylosuccinate synthetase.